The sequence spans 348 residues: Probable protein phosphatase 2C 35 (348 aa).

A compositionally biased stretch (low complexity) spans 11–24; the sequence is RYPSSSSDGDSRGP. A disordered region spans residues 11 to 40; that stretch reads RYPSSSSDGDSRGPLEANGVLKGKDQKPLG. One can recognise a PPM-type phosphatase domain in the interval 52-342; sequence VYSVLSQRGY…DDITIIIVQI (291 aa). Residues aspartate 93, glycine 94, aspartate 289, and aspartate 333 each contribute to the Mn(2+) site.

This sequence belongs to the PP2C family. Mg(2+) is required as a cofactor. The cofactor is Mn(2+).

The enzyme catalyses O-phospho-L-seryl-[protein] + H2O = L-seryl-[protein] + phosphate. The catalysed reaction is O-phospho-L-threonyl-[protein] + H2O = L-threonyl-[protein] + phosphate. This is Probable protein phosphatase 2C 35 from Arabidopsis thaliana (Mouse-ear cress).